Consider the following 418-residue polypeptide: Intracellular coagulation inhibitor 1 (418 aa).

The first 24 residues, 1 to 24 (MKLGDWKFCLLLFQLMFLTNVCLS), serve as a signal peptide directing secretion. N-linked (GlcNAc...) asparagine glycans are attached at residues Asn-49 and Asn-404.

It belongs to the serpin family. In terms of assembly, monomer. Forms a covalent heterodimer with clotting factor C. Interacts with big defensin. N-glycosylated. In terms of tissue distribution, expressed in hemocytes (at protein level).

Its subcellular location is the secreted. In terms of biological role, serine protease inhibitor that specifically inhibits clotting factor C. Does not inhibit clotting factor B or proclotting enzyme. The sequence is that of Intracellular coagulation inhibitor 1 from Tachypleus tridentatus (Japanese horseshoe crab).